The sequence spans 815 residues: MREIHSLFSLSLFLISSSLSVALDYNVITPKEFLKDGDTLSSPDQVFQLGFFSLDQEEQPQHRFLGLWYMEPFAVVWVANRNNPLYGTSGFLNLSSLGDLQLFDGEHKALWSSSSSSTKASKTANNPLLKISCSGNLISSDGEEAVLWQSFDYPMNTILAGMKLGKNFKTQMEWSLSSWKTLKDPSPGDFTLSLDTRGLPQLILRKNGDSSYSYRLGSWNGLSFTGAPAMGRENSLFDYKFTSSAQEVNYSWTPRHRIVSRLVLNNTGKLHRFIQSKQNQWILANTAPEDECDYYSICGAYAVCGINSKNTPSCSCLQGFKPKSGRKWNISRGAYGCVHEIPTNCEKKDAFVKFPGLKLPDTSWSWYDAKNEMTLEDCKIKCSSNCSCTAYANTDIREGGKGCLLWFGDLVDMREYSSFGQDVYIRMGFAKIEFKGREVVGMVVGSVVAIAVVLVVVFACFRKKIMKRYRGENFRKGIEEEDLDLPIFDRKTISIATDDFSYVNFLGRGGFGPVYKGKLEDGQEIAVKRLSANSGQGVEEFKNEVKLIAKLQHRNLVRLLGCCIQGEECMLIYEYMPNKSLDFFIFDERRSTELDWKKRMNIINGVARGILYLHQDSRLRIIHRDLKAGNVLLDNDMNPKISDFGLAKSFGGDQSESSTNRVVGTYGYMPPEYAIDGHFSVKSDVFSFGVLVLEIITGKTNRGFRHADHDLNLLGHVWKMWVEDREIEVPEEEWLEETSVIPEVLRCIHVALLCVQQKPEDRPTMASVVLMFGSDSSLPHPTQPGFFTNRNVPDISSSLSLRSQNEVSITMLQGR.

An N-terminal signal peptide occupies residues 1-22 (MREIHSLFSLSLFLISSSLSVA). The Extracellular segment spans residues 23 to 438 (LDYNVITPKE…FAKIEFKGRE (416 aa)). In terms of domain architecture, Bulb-type lectin spans 25 to 152 (YNVITPKEFL…EEAVLWQSFD (128 aa)). Residues Asn93, Asn249, and Asn265 are each glycosylated (N-linked (GlcNAc...) asparagine). One can recognise an EGF-like domain in the interval 288–326 (PEDECDYYSICGAYAVCGINSKNTPSCSCLQGFKPKSGR). Cystine bridges form between Cys292-Cys304 and Cys298-Cys314. 2 N-linked (GlcNAc...) asparagine glycosylation sites follow: Asn329 and Asn385. A PAN domain is found at 345–428 (CEKKDAFVKF…FGQDVYIRMG (84 aa)). 2 cysteine pairs are disulfide-bonded: Cys378/Cys403 and Cys382/Cys388. The chain crosses the membrane as a helical span at residues 439 to 459 (VVGMVVGSVVAIAVVLVVVFA). Residues 460–815 (CFRKKIMKRY…EVSITMLQGR (356 aa)) lie on the Cytoplasmic side of the membrane. A Protein kinase domain is found at 500–783 (FSYVNFLGRG…SDSSLPHPTQ (284 aa)). Residues 506–514 (LGRGGFGPV) and Lys528 contribute to the ATP site. Phosphoserine is present on Ser534. The interval 589–606 (RRSTELDWKKRMNIINGV) is caM-binding. Residue Asp625 is the Proton acceptor of the active site. At Ser642 the chain carries Phosphoserine. The residue at position 659 (Thr659) is a Phosphothreonine. A phosphoserine mark is found at Ser797 and Ser803. Thr810 is modified (phosphothreonine).

This sequence belongs to the protein kinase superfamily. Ser/Thr protein kinase family. As to quaternary structure, interacts with PUB9, PUB13 and PUB14.

Its subcellular location is the cell membrane. The catalysed reaction is L-seryl-[protein] + ATP = O-phospho-L-seryl-[protein] + ADP + H(+). It catalyses the reaction L-threonyl-[protein] + ATP = O-phospho-L-threonyl-[protein] + ADP + H(+). This is G-type lectin S-receptor-like serine/threonine-protein kinase SD1-1 (SD11) from Arabidopsis thaliana (Mouse-ear cress).